A 126-amino-acid polypeptide reads, in one-letter code: uncharacterized protein (126 aa).

This is an uncharacterized protein from Escherichia coli (strain K12).